The sequence spans 129 residues: Large ribosomal subunit protein bL12c (129 aa).

It belongs to the bacterial ribosomal protein bL12 family. As to quaternary structure, homodimer. Part of the ribosomal stalk of the 50S ribosomal subunit. Forms a multimeric L10(L12)X complex, where L10 forms an elongated spine to which 2 to 4 L12 dimers bind in a sequential fashion. Binds GTP-bound translation factors.

The protein resides in the plastid. It is found in the chloroplast. Forms part of the ribosomal stalk which helps the ribosome interact with GTP-bound translation factors. Is thus essential for accurate translation. This is Large ribosomal subunit protein bL12c from Pyropia yezoensis (Susabi-nori).